The sequence spans 1164 residues: DNA-directed RNA polymerase 133 kDa polypeptide (1164 aa).

This sequence belongs to the RNA polymerase beta chain family. In terms of assembly, the DNA-dependent RNA polymerase used for intermediate and late genes expression consists of eight subunits 147 kDa, 133 kDa, 35 kDa, 30 kDa, 22 kDa, 19 kDa, 18 kDa and 7 kDa totalling more than 500 kDa in mass. The same holoenzyme, with the addition of the transcription-specificity factor RAP94, is used for early gene expression.

The protein localises to the virion. It catalyses the reaction RNA(n) + a ribonucleoside 5'-triphosphate = RNA(n+1) + diphosphate. In terms of biological role, part of the DNA-dependent RNA polymerase which catalyzes the transcription of viral DNA into RNA using the four ribonucleoside triphosphates as substrates. Responsible for the transcription of early, intermediate and late genes. DNA-dependent RNA polymerase associates with the early transcription factor (ETF), itself composed of OPG118 and OPG133, thereby allowing the early genes transcription. Late transcription, and probably also intermediate transcription, require newly synthesized RNA polymerase. The polypeptide is DNA-directed RNA polymerase 133 kDa polypeptide (OPG151) (Homo sapiens (Human)).